The following is a 367-amino-acid chain: Homoserine O-acetyltransferase (367 aa).

The region spanning 44-350 (NAILVTHAWT…AYGHDAFLLE (307 aa)) is the AB hydrolase-1 domain. Catalysis depends on Ser-150, which acts as the Nucleophile. Residue Arg-217 participates in substrate binding. Active-site residues include Asp-311 and His-344. Asp-345 is a substrate binding site.

Belongs to the AB hydrolase superfamily. MetX family. In terms of assembly, homodimer.

It localises to the cytoplasm. The catalysed reaction is L-homoserine + acetyl-CoA = O-acetyl-L-homoserine + CoA. The protein operates within amino-acid biosynthesis; L-methionine biosynthesis via de novo pathway; O-acetyl-L-homoserine from L-homoserine: step 1/1. In terms of biological role, transfers an acetyl group from acetyl-CoA to L-homoserine, forming acetyl-L-homoserine. This is Homoserine O-acetyltransferase from Citrifermentans bemidjiense (strain ATCC BAA-1014 / DSM 16622 / JCM 12645 / Bem) (Geobacter bemidjiensis).